The sequence spans 162 residues: G/U mismatch-specific DNA glycosylase (162 aa).

Belongs to the uracil-DNA glycosylase (UDG) superfamily. TDG/mug family. As to quaternary structure, binds DNA as a monomer.

It localises to the cytoplasm. The catalysed reaction is Specifically hydrolyzes mismatched double-stranded DNA and polynucleotides, releasing free uracil.. In terms of biological role, excises ethenocytosine and uracil, which can arise by alkylation or deamination of cytosine, respectively, from the corresponding mispairs with guanine in ds-DNA. It is capable of hydrolyzing the carbon-nitrogen bond between the sugar-phosphate backbone of the DNA and the mispaired base. The complementary strand guanine functions in substrate recognition. Required for DNA damage lesion repair in stationary-phase cells. The sequence is that of G/U mismatch-specific DNA glycosylase from Serratia proteamaculans (strain 568).